Here is a 502-residue protein sequence, read N- to C-terminus: Cobyric acid synthase (502 aa).

One can recognise a GATase cobBQ-type domain in the interval valine 260–phenylalanine 433. The active-site Nucleophile is the cysteine 341. Histidine 425 is a catalytic residue.

This sequence belongs to the CobB/CobQ family. CobQ subfamily.

It participates in cofactor biosynthesis; adenosylcobalamin biosynthesis. Functionally, catalyzes amidations at positions B, D, E, and G on adenosylcobyrinic A,C-diamide. NH(2) groups are provided by glutamine, and one molecule of ATP is hydrogenolyzed for each amidation. This chain is Cobyric acid synthase, found in Streptomyces coelicolor (strain ATCC BAA-471 / A3(2) / M145).